A 721-amino-acid chain; its full sequence is Peptide-N(4)-(N-acetyl-beta-glucosaminyl)asparagine amidase (721 aa).

Positions 193, 196, 225, and 228 each coordinate Zn(2+). Catalysis depends on C251, which acts as the Nucleophile. Residues H278 and D295 contribute to the active site.

This sequence belongs to the transglutaminase-like superfamily. PNGase family. It depends on Zn(2+) as a cofactor.

It is found in the cytoplasm. It catalyses the reaction Hydrolysis of an N(4)-(acetyl-beta-D-glucosaminyl)asparagine residue in which the glucosamine residue may be further glycosylated, to yield a (substituted) N-acetyl-beta-D-glucosaminylamine and a peptide containing an aspartate residue.. Specifically deglycosylates the denatured form of N-linked glycoproteins in the cytoplasm and assists their proteasome-mediated degradation. Cleaves the beta-aspartyl-glucosamine (GlcNAc) of the glycan and the amide side chain of Asn, converting Asn to Asp. Prefers proteins containing high-mannose over those bearing complex type oligosaccharides. Can recognize misfolded proteins in the endoplasmic reticulum that are exported to the cytosol to be destroyed and deglycosylate them, while it has no activity toward native proteins. Deglycosylation is a prerequisite for subsequent proteasome-mediated degradation of some, but not all, misfolded glycoproteins. In Arabidopsis thaliana (Mouse-ear cress), this protein is Peptide-N(4)-(N-acetyl-beta-glucosaminyl)asparagine amidase (PNG1).